Consider the following 368-residue polypeptide: tRNA/tmRNA (uracil-C(5))-methyltransferase (368 aa).

5 residues coordinate S-adenosyl-L-methionine: Q186, Y214, N219, E235, and D295. Catalysis depends on C320, which acts as the Nucleophile. The active-site Proton acceptor is E354.

This sequence belongs to the class I-like SAM-binding methyltransferase superfamily. RNA M5U methyltransferase family. TrmA subfamily.

It catalyses the reaction uridine(54) in tRNA + S-adenosyl-L-methionine = 5-methyluridine(54) in tRNA + S-adenosyl-L-homocysteine + H(+). The catalysed reaction is uridine(341) in tmRNA + S-adenosyl-L-methionine = 5-methyluridine(341) in tmRNA + S-adenosyl-L-homocysteine + H(+). Dual-specificity methyltransferase that catalyzes the formation of 5-methyluridine at position 54 (m5U54) in all tRNAs, and that of position 341 (m5U341) in tmRNA (transfer-mRNA). This chain is tRNA/tmRNA (uracil-C(5))-methyltransferase, found in Aromatoleum aromaticum (strain DSM 19018 / LMG 30748 / EbN1) (Azoarcus sp. (strain EbN1)).